Reading from the N-terminus, the 250-residue chain is Ribonuclease HII (250 aa).

The region spanning 66–250 is the RNase H type-2 domain; that stretch reads QLVAGVDEVG…TFAPVSDFFK (185 aa). Positions 72, 73, and 164 each coordinate a divalent metal cation.

This sequence belongs to the RNase HII family. It depends on Mn(2+) as a cofactor. Mg(2+) is required as a cofactor.

It localises to the cytoplasm. It carries out the reaction Endonucleolytic cleavage to 5'-phosphomonoester.. Endonuclease that specifically degrades the RNA of RNA-DNA hybrids. This chain is Ribonuclease HII, found in Lactobacillus acidophilus (strain ATCC 700396 / NCK56 / N2 / NCFM).